We begin with the raw amino-acid sequence, 373 residues long: Molybdenum import ATP-binding protein ModC (373 aa).

Residues 4–240 form the ABC transporter domain; it reads LTPPTIRAAF…PKLPLAIARD (237 aa). An ATP-binding site is contributed by 38–45; sequence GPSGCGKS. Positions 299-369 constitute a Mop domain; the sequence is ASSILNAIAA…IKGVALAPGR (71 aa).

Belongs to the ABC transporter superfamily. Molybdate importer (TC 3.A.1.8) family. As to quaternary structure, the complex is composed of two ATP-binding proteins (ModC), two transmembrane proteins (ModB) and a solute-binding protein (ModA).

The protein resides in the cell inner membrane. It carries out the reaction molybdate(out) + ATP + H2O = molybdate(in) + ADP + phosphate + H(+). Part of the ABC transporter complex ModABC involved in molybdenum import. Responsible for energy coupling to the transport system. In Rhodopseudomonas palustris (strain ATCC BAA-98 / CGA009), this protein is Molybdenum import ATP-binding protein ModC.